We begin with the raw amino-acid sequence, 446 residues long: Chromosomal replication initiator protein DnaA (446 aa).

The interval Met-1 to Glu-72 is domain I, interacts with DnaA modulators. Residues Glu-72 to Asn-109 are domain II. The interval Met-110–Ser-326 is domain III, AAA+ region. ATP contacts are provided by Gly-154, Gly-156, Lys-157, and Thr-158. The tract at residues Ser-327–Lys-446 is domain IV, binds dsDNA.

Belongs to the DnaA family. Oligomerizes as a right-handed, spiral filament on DNA at oriC.

Its subcellular location is the cytoplasm. Functionally, plays an essential role in the initiation and regulation of chromosomal replication. ATP-DnaA binds to the origin of replication (oriC) to initiate formation of the DNA replication initiation complex once per cell cycle. Binds the DnaA box (a 9 base pair repeat at the origin) and separates the double-stranded (ds)DNA. Forms a right-handed helical filament on oriC DNA; dsDNA binds to the exterior of the filament while single-stranded (ss)DNA is stabiized in the filament's interior. The ATP-DnaA-oriC complex binds and stabilizes one strand of the AT-rich DNA unwinding element (DUE), permitting loading of DNA polymerase. After initiation quickly degrades to an ADP-DnaA complex that is not apt for DNA replication. Binds acidic phospholipids. This Bacillus pumilus (strain SAFR-032) protein is Chromosomal replication initiator protein DnaA.